Consider the following 200-residue polypeptide: Large ribosomal subunit protein uL4 (200 aa).

A disordered region spans residues 38-68 (GRQGSKQQKTRSDVRGGGKRPWRQKGTGRAR). The segment covering 54–65 (GGKRPWRQKGTG) has biased composition (basic residues).

It belongs to the universal ribosomal protein uL4 family. In terms of assembly, part of the 50S ribosomal subunit.

One of the primary rRNA binding proteins, this protein initially binds near the 5'-end of the 23S rRNA. It is important during the early stages of 50S assembly. It makes multiple contacts with different domains of the 23S rRNA in the assembled 50S subunit and ribosome. Its function is as follows. Forms part of the polypeptide exit tunnel. In Pseudomonas savastanoi pv. phaseolicola (strain 1448A / Race 6) (Pseudomonas syringae pv. phaseolicola (strain 1448A / Race 6)), this protein is Large ribosomal subunit protein uL4.